The chain runs to 78 residues: Major outer membrane lipoprotein Lpp (78 aa).

The N-terminal stretch at 1–20 (MNRTKIVLGAVVLASTLLAG) is a signal peptide. The N-palmitoyl cysteine moiety is linked to residue cysteine 21. A lipid anchor (S-diacylglycerol cysteine) is attached at cysteine 21. 2 repeats span residues 24–34 (TAKVDQLTSDI) and 38–48 (NAKVDQLSNDV). A coiled-coil region spans residues 27-75 (VDQLTSDIQTLNAKVDQLSNDVNAVHTDVQAAKDDAARANQRLDNQVRS). Lysine 78 bears the N6-murein peptidoglycan lysine mark.

Belongs to the Lpp family. As to quaternary structure, homotrimer.

It is found in the cell outer membrane. The protein resides in the secreted. Its subcellular location is the cell wall. In terms of biological role, a highly abundant outer membrane lipoprotein that controls the distance between the inner and outer membranes. The only protein known to be covalently linked to the peptidoglycan network (PGN). Also non-covalently binds the PGN. The link between the cell outer membrane and PGN contributes to maintenance of the structural and functional integrity of the cell envelope, and maintains the correct distance between the PGN and the outer membrane. This is Major outer membrane lipoprotein Lpp from Photorhabdus laumondii subsp. laumondii (strain DSM 15139 / CIP 105565 / TT01) (Photorhabdus luminescens subsp. laumondii).